We begin with the raw amino-acid sequence, 34 residues long: U4-theraphotoxin-Hs1a (34 aa).

Disulfide bonds link cysteine 3-cysteine 17, cysteine 10-cysteine 22, and cysteine 16-cysteine 33.

Belongs to the neurotoxin 14 (magi-1) family. 05 (ICK-7) subfamily. As to expression, expressed by the venom gland.

It is found in the secreted. In terms of biological role, intracisternal injection paralyzes mice. This Cyriopagopus schmidti (Chinese bird spider) protein is U4-theraphotoxin-Hs1a.